Here is a 590-residue protein sequence, read N- to C-terminus: Guanylate-binding protein 1 (590 aa).

The tract at residues methionine 1–cysteine 309 is GTPase domain (Globular). The region spanning threonine 35–lysine 276 is the GB1/RHD3-type G domain. Residues glycine 45 to serine 52, leucine 67 to serine 69, and aspartate 97 to leucine 101 contribute to the GTP site. Serine 156 carries the post-translational modification Phosphoserine. Cysteine 587 is subject to Cysteine methyl ester. Cysteine 587 is lipidated: S-farnesyl cysteine. At threonine 588 the chain carries Phosphothreonine. A propeptide spans threonine 588 to serine 590 (removed in mature form).

The protein belongs to the TRAFAC class dynamin-like GTPase superfamily. GB1/RHD3 GTPase family. GB1 subfamily. Homodimer; homodimerization occurs upon GTP-binding and is required for the second hydrolysis step from GDP to GMP. Undergoes conformational changes and oligomerization upon GTP-binding and hydrolysis. Heterodimer with other family members, including GBP2, GBP3, GBP4 and GBP5. Dimerization regulates subcellular location to membranous structures. Interacts with SQSTM1. Interacts (when phosphorylated) with 14-3-3 protein sigma (SFN); leading to GBP1 retention in the cytosol and inactivation. Post-translationally, isoprenylation is required for proper subcellular location. In terms of processing, phosphorylated at Ser-156 by PIM1 in absence of infection, inhibits GBP1: phosphorylation promotes interaction with 14-3-3 protein sigma (SFN), leading to GBP1 retention in the cytosol. Dephosphorylated in response to infection, liberating GBP1.

Its subcellular location is the cytoplasmic vesicle membrane. The protein resides in the golgi apparatus membrane. It localises to the cell membrane. It is found in the cytoplasm. The protein localises to the cytosol. Its subcellular location is the secreted. The enzyme catalyses GTP + H2O = GDP + phosphate + H(+). It catalyses the reaction GDP + H2O = GMP + phosphate + H(+). Functionally, interferon (IFN)-inducible GTPase that plays important roles in innate immunity against a diverse range of bacterial, viral and protozoan pathogens. Hydrolyzes GTP to GMP in two consecutive cleavage reactions: GTP is first hydrolyzed to GDP and then to GMP in a processive manner. Following infection, recruited to the pathogen-containing vacuoles or vacuole-escaped bacteria and promotes both inflammasome assembly and autophagy. Acts as a positive regulator of inflammasome assembly by facilitating the detection of inflammasome ligands from pathogens. Involved in the lysis of pathogen-containing vacuoles, releasing pathogens into the cytosol. Following pathogen release in the cytosol, forms a protein coat in a GTPase-dependent manner that encapsulates pathogens and promotes the detection of ligands by pattern recognition receptors. Plays a key role in inflammasome assembly in response to infection by Gram-negative bacteria: following pathogen release in the cytosol, forms a protein coat that encapsulates Gram-negative bacteria and directly binds to lipopolysaccharide (LPS), disrupting the O-antigen barrier and unmasking lipid A that is that detected by the non-canonical inflammasome effector CASP4/CASP11. Also promotes recruitment of proteins that mediate bacterial cytolysis, leading to release double-stranded DNA (dsDNA) that activates the AIM2 inflammasome. Involved in autophagy by regulating bacteriolytic peptide generation via its interaction with ubiquitin-binding protein SQSTM1, which delivers monoubiquitinated proteins to autolysosomes for the generation of bacteriolytic peptides. Confers protection to several pathogens, including the bacterial pathogens L.monocytogenes and M.bovis BCG as well as the protozoan pathogen T.gondii. Exhibits antiviral activity against influenza virus. The sequence is that of Guanylate-binding protein 1 (GBP1) from Chlorocebus aethiops (Green monkey).